A 125-amino-acid polypeptide reads, in one-letter code: Holo-[acyl-carrier-protein] synthase (125 aa).

Mg(2+) is bound by residues Asp-8 and Glu-57.

Belongs to the P-Pant transferase superfamily. AcpS family. Mg(2+) is required as a cofactor.

Its subcellular location is the cytoplasm. It carries out the reaction apo-[ACP] + CoA = holo-[ACP] + adenosine 3',5'-bisphosphate + H(+). Its function is as follows. Transfers the 4'-phosphopantetheine moiety from coenzyme A to a Ser of acyl-carrier-protein. The polypeptide is Holo-[acyl-carrier-protein] synthase (Natranaerobius thermophilus (strain ATCC BAA-1301 / DSM 18059 / JW/NM-WN-LF)).